Here is an 861-residue protein sequence, read N- to C-terminus: Translation initiation factor IF-2 (861 aa).

Disordered stretches follow at residues 1–69 and 92–273; these read MSDA…GESA and ARAR…GREK. Positions 53 to 65 are enriched in gly residues; it reads GGPGGKQGGGAKG. Over residues 94–108 the composition is skewed to basic and acidic residues; the sequence is ARAEAADREAQKKQD. A compositionally biased stretch (low complexity) spans 109-120; it reads AAAMAQRAASEQ. 2 stretches are compositionally biased toward basic and acidic residues: residues 121-155 and 163-186; these read RQLEEQRERVAREAREAEEAAQKAIEDEARLKAEA and DSGRKRDDESSRRRPPAKDEKRTP. A compositionally biased stretch (low complexity) spans 213 to 223; it reads PGPAAKQQPAR. The segment covering 255–273 has biased composition (basic and acidic residues); the sequence is RAREREKQRRQDTSGGREK. The region spanning 357–527 is the tr-type G domain; sequence PRAPVIAVMG…ALQAELLDLK (171 aa). The interval 366-373 is G1; that stretch reads GHVDHGKT. 366–373 is a GTP binding site; that stretch reads GHVDHGKT. The interval 391 to 395 is G2; that stretch reads GITQH. The segment at 413-416 is G3; the sequence is DTPG. Residues 413–417 and 467–470 contribute to the GTP site; these read DTPGH and NKCD. The tract at residues 467-470 is G4; it reads NKCD. Residues 503 to 505 form a G5 region; that stretch reads SAK.

Belongs to the TRAFAC class translation factor GTPase superfamily. Classic translation factor GTPase family. IF-2 subfamily.

Its subcellular location is the cytoplasm. Functionally, one of the essential components for the initiation of protein synthesis. Protects formylmethionyl-tRNA from spontaneous hydrolysis and promotes its binding to the 30S ribosomal subunits. Also involved in the hydrolysis of GTP during the formation of the 70S ribosomal complex. The polypeptide is Translation initiation factor IF-2 (Maricaulis maris (strain MCS10) (Caulobacter maris)).